A 178-amino-acid polypeptide reads, in one-letter code: Protein GrpE (178 aa).

It belongs to the GrpE family. Homodimer.

The protein resides in the cytoplasm. In terms of biological role, participates actively in the response to hyperosmotic and heat shock by preventing the aggregation of stress-denatured proteins, in association with DnaK and GrpE. It is the nucleotide exchange factor for DnaK and may function as a thermosensor. Unfolded proteins bind initially to DnaJ; upon interaction with the DnaJ-bound protein, DnaK hydrolyzes its bound ATP, resulting in the formation of a stable complex. GrpE releases ADP from DnaK; ATP binding to DnaK triggers the release of the substrate protein, thus completing the reaction cycle. Several rounds of ATP-dependent interactions between DnaJ, DnaK and GrpE are required for fully efficient folding. This chain is Protein GrpE, found in Bordetella avium (strain 197N).